We begin with the raw amino-acid sequence, 64 residues long: Phylloxin-B1 (64 aa).

An N-terminal signal peptide occupies residues 1 to 22; that stretch reads MVFLKKSLLLVLFVGLVSLSIC. Positions 23–42 are excised as a propeptide; that stretch reads EENKREEHEEIEENKEKAEE. Position 63 is a glutamine amide (glutamine 63).

Expressed by the skin glands.

It localises to the secreted. Its function is as follows. Antimicrobial peptide against the wall-less bacteria A.laidlawii and S.melliferum, the Gram-positive bacteria B.megaterium KM, C.glutamicum ATCC 27853 and M.luteus ATCC 27853 and the Gram-negative-bacteria R.meliloti 102F34 and E.coli K12. This is Phylloxin-B1 from Phyllomedusa bicolor (Two-colored leaf frog).